A 176-amino-acid polypeptide reads, in one-letter code: MVNSMPKPFLTPGTLYCGAAPAVISTVLGSCVAVCLIDRHNRAAGMNHFVLPHNPAGEDSLRYGDVALDRLHARMGELGCETKDLRAKVFGGAAVLPFGATGDSVGTKNVKIAIEWLHAQGIPTLARRTGGENGLLIRFYTATGRVLVRTIQSAITIDLGGISPAFDSRQSPFFQE.

The protein belongs to the CheD family.

It carries out the reaction L-glutaminyl-[protein] + H2O = L-glutamyl-[protein] + NH4(+). Probably deamidates glutamine residues to glutamate on methyl-accepting chemotaxis receptors (MCPs), playing an important role in chemotaxis. The polypeptide is Probable chemoreceptor glutamine deamidase CheD (Rhodospirillum rubrum (strain ATCC 11170 / ATH 1.1.1 / DSM 467 / LMG 4362 / NCIMB 8255 / S1)).